The chain runs to 119 residues: Gibberellin-regulated protein 9 (119 aa).

Residues 1 to 24 (MKKMNVVAFVTLIISFLLLSQVLA) form the signal peptide.

The protein belongs to the GASA family. Six disulfide bonds may be present.

It localises to the secreted. In terms of biological role, gibberellin-regulated protein that may function in hormonal controlled steps of development such as seed germination, flowering and seed maturation. This is Gibberellin-regulated protein 9 (GASA9) from Arabidopsis thaliana (Mouse-ear cress).